Reading from the N-terminus, the 169-residue chain is Transcription antitermination protein NusB (169 aa).

Residues 1 to 20 (MAESSNKPFRGPVRANDRKA) form a disordered region.

It belongs to the NusB family.

Its function is as follows. Involved in transcription antitermination. Required for transcription of ribosomal RNA (rRNA) genes. Binds specifically to the boxA antiterminator sequence of the ribosomal RNA (rrn) operons. The polypeptide is Transcription antitermination protein NusB (Bradyrhizobium sp. (strain BTAi1 / ATCC BAA-1182)).